We begin with the raw amino-acid sequence, 387 residues long: Erythronate-4-phosphate dehydrogenase (387 aa).

Residues Ser-45 and Thr-67 each coordinate substrate. Asp-147 provides a ligand contact to NAD(+). Arg-208 is an active-site residue. Asp-232 provides a ligand contact to NAD(+). Glu-237 is an active-site residue. The active-site Proton donor is His-254. Position 257 (Gly-257) interacts with NAD(+). Tyr-258 contacts substrate.

It belongs to the D-isomer specific 2-hydroxyacid dehydrogenase family. PdxB subfamily. In terms of assembly, homodimer.

It is found in the cytoplasm. The enzyme catalyses 4-phospho-D-erythronate + NAD(+) = (R)-3-hydroxy-2-oxo-4-phosphooxybutanoate + NADH + H(+). Its pathway is cofactor biosynthesis; pyridoxine 5'-phosphate biosynthesis; pyridoxine 5'-phosphate from D-erythrose 4-phosphate: step 2/5. In terms of biological role, catalyzes the oxidation of erythronate-4-phosphate to 3-hydroxy-2-oxo-4-phosphonooxybutanoate. The sequence is that of Erythronate-4-phosphate dehydrogenase from Shewanella violacea (strain JCM 10179 / CIP 106290 / LMG 19151 / DSS12).